Here is a 217-residue protein sequence, read N- to C-terminus: Pyrophosphatase PpaX (217 aa).

Aspartate 11 serves as the catalytic Nucleophile.

This sequence belongs to the HAD-like hydrolase superfamily. PpaX family. The cofactor is Mg(2+).

The catalysed reaction is diphosphate + H2O = 2 phosphate + H(+). Its function is as follows. Hydrolyzes pyrophosphate formed during P-Ser-HPr dephosphorylation by HPrK/P. Might play a role in controlling the intracellular pyrophosphate pool. This is Pyrophosphatase PpaX from Listeria monocytogenes serotype 4a (strain HCC23).